A 125-amino-acid chain; its full sequence is Allatostatin (125 aa).

The N-terminal stretch at 1–26 (MKTSAYNVYLGVVAAMLALLFVTINA) is a signal peptide. The propeptide occupies 27 to 106 (APMEADDETA…SRLARQWRAD (80 aa)). Position 109 is a pyrrolidone carboxylic acid (Q109).

Belongs to the allatostatin family.

Its subcellular location is the secreted. Strongly inhibits juvenile hormone biosynthesis in vitro by the corpora allata from fifth-stadium larvae and adult females. The protein is Allatostatin of Spodoptera frugiperda (Fall armyworm).